A 302-amino-acid chain; its full sequence is Putative peptide permease protein BOV_A0350 (302 aa).

The disordered stretch occupies residues 1–22 (MRSSIHASRLRKMGQSIPASTG). Transmembrane regions (helical) follow at residues 38-58 (IFGL…PLWL), 101-121 (LLVA…IGAI), 147-167 (IFLL…VVVI), 200-222 (AGLG…VVYA), 230-250 (ILLE…AASW), and 268-288 (WQWL…NFIG). The ABC transmembrane type-1 domain maps to 97–288 (GRISLLVAVS…LAVLAINFIG (192 aa)).

This sequence belongs to the binding-protein-dependent transport system permease family. In terms of assembly, the complex is composed of two ATP-binding proteins (BOV_A0347 and BOV_A0348), two transmembrane proteins (BOV_A0350 and BOV_A0351) and a solute-binding protein (BOV_A0352).

It localises to the cell inner membrane. Its function is as follows. Probably part of an ABC transporter complex that could be involved in peptide import. Probably responsible for the translocation of the substrate across the membrane. This chain is Putative peptide permease protein BOV_A0350, found in Brucella ovis (strain ATCC 25840 / 63/290 / NCTC 10512).